The chain runs to 244 residues: MSFIVYPALDIRDGRVVRLRQGDYAQETSYGDDPLPRTQAFAAQGAQWMHLVDLDAARAGGYTLAPLLSSIRAQTTLQVQTGGGVRGRDDVARILDAGAGRVVVGSLAVRRPDEVVGWLEEFGAERITIALDARQDAQGQWQLPVHGWTENADVTLDDLARRYARAGMRHLLCTDIARDGMLAGPNISLYQHLSALLPGVAVQASGGIRDVADVAEARAAGCGGAILGKALLEQRMDLAEALAC.

The Proton acceptor role is filled by Asp-10. Residue Asp-132 is the Proton donor of the active site.

This sequence belongs to the HisA/HisF family.

It is found in the cytoplasm. The catalysed reaction is 1-(5-phospho-beta-D-ribosyl)-5-[(5-phospho-beta-D-ribosylamino)methylideneamino]imidazole-4-carboxamide = 5-[(5-phospho-1-deoxy-D-ribulos-1-ylimino)methylamino]-1-(5-phospho-beta-D-ribosyl)imidazole-4-carboxamide. It functions in the pathway amino-acid biosynthesis; L-histidine biosynthesis; L-histidine from 5-phospho-alpha-D-ribose 1-diphosphate: step 4/9. The sequence is that of 1-(5-phosphoribosyl)-5-[(5-phosphoribosylamino)methylideneamino] imidazole-4-carboxamide isomerase from Stenotrophomonas maltophilia (strain R551-3).